We begin with the raw amino-acid sequence, 219 residues long: Small ribosomal subunit protein uS3 (219 aa).

The KH type-2 domain occupies 38-106; the sequence is IRTYLKKKLY…KLNLEIKEIK (69 aa).

This sequence belongs to the universal ribosomal protein uS3 family. As to quaternary structure, part of the 30S ribosomal subunit. Forms a tight complex with proteins S10 and S14.

Functionally, binds the lower part of the 30S subunit head. Binds mRNA in the 70S ribosome, positioning it for translation. The chain is Small ribosomal subunit protein uS3 from Lachnoclostridium phytofermentans (strain ATCC 700394 / DSM 18823 / ISDg) (Clostridium phytofermentans).